Reading from the N-terminus, the 980-residue chain is Vacuolar protein sorting-associated protein 11 homolog (980 aa).

The CHCR repeat unit spans residues 407 to 554 (YKETIGMLEP…GRDLLIHARD (148 aa)). The segment at 803–843 (CSACDTPLQLPTVHFLCKHAYHVHCFESYNMDGSDKCPACQ) adopts an RING-type; atypical zinc-finger fold. Residues 886–898 (TKKTKKSEAKKDP) show a composition bias toward basic and acidic residues. Residues 886-980 (TKKTKKSEAK…APAPSTNPFD (95 aa)) are disordered. Composition is skewed to polar residues over residues 917–937 (TTISRTMSTVSSNMATPSRQR) and 947–960 (TNPFFNSDSGTRLS).

The protein belongs to the VPS11 family. Probable core component of at least two putative endosomal tethering complexes, the homotypic fusion and vacuole protein sorting (HOPS) complex and the class C core vacuole/endosome tethering (CORVET) complex. Their common core is composed of the class C Vps proteins vps-11, vps-16 and vps-18, which in HOPS further associates with vps-33.1, vps-39 and vps-41 and in CORVET with vps-8 and vps-33.2.

It localises to the late endosome membrane. The protein localises to the lysosome membrane. In terms of biological role, plays a role in vesicle-mediated protein trafficking to lysosomal compartments including the endocytic membrane transport pathways. Believed to act as a core component of the putative HOPS and CORVET endosomal tethering complexes which are proposed to be involved in the rab-5-to-rab-7 endosome conversion probably implicating sand-1, and via binding SNAREs and SNARE complexes to mediate tethering and docking events during SNARE-mediated membrane fusion. The HOPS complex is proposed to be recruited to Rab7 on the late endosomal membrane and to regulate late endocytic, phagocytic and autophagic traffic towards lysosomes. Within the HOPS complex, contributes to the normal development of gut granules in embryonic and adult intestinal cells. The CORVET complex is proposed to function as a Rab5 effector to mediate early endosome fusion probably in specific endosome subpopulations. Required for fusion of endosomes and autophagosomes with lysosomes. Involved in cargo transport from early to late endosomes and required for the transition from early to late endosomes. Possibly has a role in clearance of apoptotic cells during programmed cell death. The polypeptide is Vacuolar protein sorting-associated protein 11 homolog (Caenorhabditis elegans).